The chain runs to 187 residues: Ribosome-recycling factor (187 aa).

Belongs to the RRF family.

The protein localises to the cytoplasm. In terms of biological role, responsible for the release of ribosomes from messenger RNA at the termination of protein biosynthesis. May increase the efficiency of translation by recycling ribosomes from one round of translation to another. The protein is Ribosome-recycling factor of Ligilactobacillus salivarius (strain UCC118) (Lactobacillus salivarius).